Consider the following 441-residue polypeptide: Probable D-serine dehydratase (441 aa).

The residue at position 115 (Lys115) is an N6-(pyridoxal phosphate)lysine.

Belongs to the serine/threonine dehydratase family. DsdA subfamily. Requires pyridoxal 5'-phosphate as cofactor.

It catalyses the reaction D-serine = pyruvate + NH4(+). The chain is Probable D-serine dehydratase from Fusobacterium nucleatum subsp. nucleatum (strain ATCC 25586 / DSM 15643 / BCRC 10681 / CIP 101130 / JCM 8532 / KCTC 2640 / LMG 13131 / VPI 4355).